The following is a 122-amino-acid chain: Large ribosomal subunit protein uL14 (122 aa).

The protein belongs to the universal ribosomal protein uL14 family. Part of the 50S ribosomal subunit. Forms a cluster with proteins L3 and L19. In the 70S ribosome, L14 and L19 interact and together make contacts with the 16S rRNA in bridges B5 and B8.

Its function is as follows. Binds to 23S rRNA. Forms part of two intersubunit bridges in the 70S ribosome. The chain is Large ribosomal subunit protein uL14 from Nocardia farcinica (strain IFM 10152).